The chain runs to 179 residues: ATP synthase subunit b (179 aa).

Residues 23-43 traverse the membrane as a helical segment; it reads IFWLIITFGILYVVLSKLILP.

It belongs to the ATPase B chain family. As to quaternary structure, F-type ATPases have 2 components, F(1) - the catalytic core - and F(0) - the membrane proton channel. F(1) has five subunits: alpha(3), beta(3), gamma(1), delta(1), epsilon(1). F(0) has three main subunits: a(1), b(2) and c(10-14). The alpha and beta chains form an alternating ring which encloses part of the gamma chain. F(1) is attached to F(0) by a central stalk formed by the gamma and epsilon chains, while a peripheral stalk is formed by the delta and b chains.

It is found in the cell inner membrane. In terms of biological role, f(1)F(0) ATP synthase produces ATP from ADP in the presence of a proton or sodium gradient. F-type ATPases consist of two structural domains, F(1) containing the extramembraneous catalytic core and F(0) containing the membrane proton channel, linked together by a central stalk and a peripheral stalk. During catalysis, ATP synthesis in the catalytic domain of F(1) is coupled via a rotary mechanism of the central stalk subunits to proton translocation. Component of the F(0) channel, it forms part of the peripheral stalk, linking F(1) to F(0). The chain is ATP synthase subunit b from Pelagibacter ubique (strain HTCC1062).